We begin with the raw amino-acid sequence, 1295 residues long: Serine protease sat autotransporter (1295 aa).

The first 49 residues, 1-49 (MNKIYSLKYSAATGGLIAVSELAKRVSGKTNRKLVATMLSLAVAGTVNA), serve as a signal peptide directing secretion. One can recognise a Peptidase S6 domain in the interval 51 to 300 (NIDISNVWAR…TKYNDKLVSE (250 aa)). Residues histidine 121, aspartate 149, and serine 256 each act as charge relay system in the active site. Positions 1029–1295 (DINGESGAWA…AINANFRYSF (267 aa)) constitute an Autotransporter domain.

In terms of processing, cleaved to release the mature protein from the outer membrane.

It is found in the periplasm. The protein resides in the secreted. It localises to the cell surface. Its subcellular location is the cell outer membrane. Inhibited by phenylmethylsulfonyl fluoride and Pefabloc. Shows serine protease activity and displays cytophatic activity, including elongation, rounding, and detachment of a proportion of the cells from monolayer in culture. Triggers vacuolation within the cytoplasm of the human bladder and kidney cells. This Escherichia coli O6:H1 (strain CFT073 / ATCC 700928 / UPEC) protein is Serine protease sat autotransporter (sat).